The primary structure comprises 198 residues: Ribonuclease HII (198 aa).

One can recognise an RNase H type-2 domain in the interval 6 to 198 (EQIAGVDEVG…APCQASLLPD (193 aa)). Aspartate 12, glutamate 13, and aspartate 108 together coordinate a divalent metal cation.

This sequence belongs to the RNase HII family. Mn(2+) is required as a cofactor. It depends on Mg(2+) as a cofactor.

It is found in the cytoplasm. It carries out the reaction Endonucleolytic cleavage to 5'-phosphomonoester.. Endonuclease that specifically degrades the RNA of RNA-DNA hybrids. This is Ribonuclease HII from Acaryochloris marina (strain MBIC 11017).